The primary structure comprises 489 residues: Probable cytochrome P450 522A1 (489 aa).

The chain crosses the membrane as a helical span at residues 1–21 (MILTIVIIILTVIFVNKYLLN). Cysteine 433 contributes to the heme binding site.

It belongs to the cytochrome P450 family. Heme is required as a cofactor.

The protein localises to the membrane. The polypeptide is Probable cytochrome P450 522A1 (cyp522A1) (Dictyostelium discoideum (Social amoeba)).